We begin with the raw amino-acid sequence, 275 residues long: Undecaprenyl-diphosphatase (275 aa).

8 helical membrane-spanning segments follow: residues 4 to 24, 54 to 74, 92 to 112, 123 to 143, 154 to 174, 194 to 214, 228 to 248, and 255 to 275; these read IYGL…EFLP, LGSI…LFGL, LHLY…LMFY, YVMY…LIHD, ISYL…LPGF, AFEF…ILDL, MFII…KLFW, and SFIP…LILI.

Belongs to the UppP family.

It is found in the cell membrane. It catalyses the reaction di-trans,octa-cis-undecaprenyl diphosphate + H2O = di-trans,octa-cis-undecaprenyl phosphate + phosphate + H(+). Catalyzes the dephosphorylation of undecaprenyl diphosphate (UPP). Confers resistance to bacitracin. The sequence is that of Undecaprenyl-diphosphatase from Baumannia cicadellinicola subsp. Homalodisca coagulata.